Consider the following 277-residue polypeptide: NH(3)-dependent NAD(+) synthetase (277 aa).

G36–S43 contacts ATP. D42 is a Mg(2+) binding site. Deamido-NAD(+) is bound at residue R118. T138 provides a ligand contact to ATP. Mg(2+) is bound at residue E143. Residues K167 and S189 each contribute to the ATP site.

Belongs to the NAD synthetase family. As to quaternary structure, homodimer.

It carries out the reaction deamido-NAD(+) + NH4(+) + ATP = AMP + diphosphate + NAD(+) + H(+). It functions in the pathway cofactor biosynthesis; NAD(+) biosynthesis; NAD(+) from deamido-NAD(+) (ammonia route): step 1/1. Its function is as follows. Catalyzes the ATP-dependent amidation of deamido-NAD to form NAD. Uses ammonia as a nitrogen source. The polypeptide is NH(3)-dependent NAD(+) synthetase (Pelodictyon phaeoclathratiforme (strain DSM 5477 / BU-1)).